The chain runs to 114 residues: SOSS complex subunit C homolog (114 aa).

Polar residues predominate over residues 1–10 (MAFQQHGNQE). The disordered stretch occupies residues 1–61 (MAFQQHGNQE…AGNTSASRIH (61 aa)).

It belongs to the SOSS-C family.

The sequence is that of SOSS complex subunit C homolog from Nematostella vectensis (Starlet sea anemone).